We begin with the raw amino-acid sequence, 481 residues long: FAD-linked oxidoreductase afoF (481 aa).

A signal peptide spans 1 to 16; it reads MRFLLQSITLVAAARA. Residues 52 to 227 enclose the FAD-binding PCMH-type domain; it reads SEWRPPTWTG…TAATFKMFDQ (176 aa). Asn82 carries N-linked (GlcNAc...) asparagine glycosylation. Position 92 is a pros-8alpha-FAD histidine (His92). 6 N-linked (GlcNAc...) asparagine glycosylation sites follow: Asn196, Asn241, Asn276, Asn309, Asn312, and Asn376.

It belongs to the oxygen-dependent FAD-linked oxidoreductase family. Requires FAD as cofactor.

In terms of biological role, FAD-linked oxidoreductase; part of the gene cluster that mediates the biosynthesis of asperfuranone, a probable antitumor agent. The polyketide synthase afoG is responsible for producing the 3,5-dimethyloctadienone moiety from acetyl-CoA, three malonyl-CoA, and two S-adenosyl methionines (SAM). The 3,5-dimethyloctadienone moiety is then loaded onto the SAT domain of afoE and extended with four malonyl-CoA and one SAM, which leads to the formation of 2,4-dihydroxy-6-(5,7-dimethyl-2-oxo-trans-3-trans-5-nonadienyl)-3-methylbenzaldehyde (compound 2) after reductive release and aldol condensation. AfoD is the next enzyme in the biosynthesis sequence and hydroxylates the side chain at the benzylic position of compound 2. After benzylic hydroxylation, a furan ring is formed after five-member ring hemiacetal formation and water elimination. AfoF and afoC are proposed to oxidize the R-diketone proton and to reduce the unconjugated carbonyl group, respectively, to generate asperfuranone. Since no intermediates could be isolated from afoF and afoC deletants, the sequence of these two enzymes is not fully understood. Moreover, since afoC deletant still produces a small amount of asperfuranone, other endogenous oxidoreductases might catalyze the same reaction with much less efficiency. This is FAD-linked oxidoreductase afoF from Emericella nidulans (strain FGSC A4 / ATCC 38163 / CBS 112.46 / NRRL 194 / M139) (Aspergillus nidulans).